Reading from the N-terminus, the 332-residue chain is DNA-directed RNA polymerase subunit alpha (332 aa).

Residues 1–232 (MQVSNFLKPR…DQLTAFVELE (232 aa)) form an alpha N-terminal domain (alpha-NTD) region. The segment at 246 to 332 (IDPVLLQPID…LREEETKVTA (87 aa)) is alpha C-terminal domain (alpha-CTD).

The protein belongs to the RNA polymerase alpha chain family. In terms of assembly, homodimer. The RNAP catalytic core consists of 2 alpha, 1 beta, 1 beta' and 1 omega subunit. When a sigma factor is associated with the core the holoenzyme is formed, which can initiate transcription.

The catalysed reaction is RNA(n) + a ribonucleoside 5'-triphosphate = RNA(n+1) + diphosphate. Functionally, DNA-dependent RNA polymerase catalyzes the transcription of DNA into RNA using the four ribonucleoside triphosphates as substrates. This Nitrosococcus oceani (strain ATCC 19707 / BCRC 17464 / JCM 30415 / NCIMB 11848 / C-107) protein is DNA-directed RNA polymerase subunit alpha.